Reading from the N-terminus, the 215-residue chain is MSKFRSLADIRRDYGELQLSEESAENDPISQFKLWFDDVLLNEKNDPTAMVLSTVDEKGYPDSRVVLLKGLENGNFIFYTNYQSAKAMQIQKNPYAALNFYWPQMARQVRVRGRVKKISSEQSDAYFSSRPIKSQFSAIVSPQSQEILDRISLEDALNQLIEEYGQKPVVRPENWGGYMIIPDEIEFWQGRDNRLHDRIHYYRHGHEWTHRRLAP.

Substrate is bound by residues 11 to 14 (RRDY) and Lys-69. FMN-binding positions include 64–69 (RVVLLK), 79–80 (YT), Lys-86, and Gln-108. 3 residues coordinate substrate: Tyr-126, Arg-130, and Ser-134. FMN contacts are provided by residues 143 to 144 (QS) and Trp-188. 194–196 (RLH) is a substrate binding site. Position 198 (Arg-198) interacts with FMN.

This sequence belongs to the pyridoxamine 5'-phosphate oxidase family. Homodimer. FMN is required as a cofactor.

It carries out the reaction pyridoxamine 5'-phosphate + O2 + H2O = pyridoxal 5'-phosphate + H2O2 + NH4(+). The catalysed reaction is pyridoxine 5'-phosphate + O2 = pyridoxal 5'-phosphate + H2O2. It participates in cofactor metabolism; pyridoxal 5'-phosphate salvage; pyridoxal 5'-phosphate from pyridoxamine 5'-phosphate: step 1/1. Its pathway is cofactor metabolism; pyridoxal 5'-phosphate salvage; pyridoxal 5'-phosphate from pyridoxine 5'-phosphate: step 1/1. Functionally, catalyzes the oxidation of either pyridoxine 5'-phosphate (PNP) or pyridoxamine 5'-phosphate (PMP) into pyridoxal 5'-phosphate (PLP). The protein is Pyridoxine/pyridoxamine 5'-phosphate oxidase of Legionella pneumophila (strain Lens).